Here is a 315-residue protein sequence, read N- to C-terminus: Mycothiol acetyltransferase (315 aa).

2 consecutive N-acetyltransferase domains span residues 8–145 and 163–315; these read VETS…LPLD and VSLR…DATA. Residue Glu39 participates in 1D-myo-inositol 2-(L-cysteinylamino)-2-deoxy-alpha-D-glucopyranoside binding. Acetyl-CoA-binding positions include 81 to 83 and 89 to 94; these read LVV and HHGVGT. Residues Glu190, Lys229, and Glu243 each contribute to the 1D-myo-inositol 2-(L-cysteinylamino)-2-deoxy-alpha-D-glucopyranoside site. Acetyl-CoA is bound at residue 247–249; that stretch reads LGV. Tyr281 contacts 1D-myo-inositol 2-(L-cysteinylamino)-2-deoxy-alpha-D-glucopyranoside. Residue 286-291 coordinates acetyl-CoA; it reads NTVAIR.

Belongs to the acetyltransferase family. MshD subfamily. As to quaternary structure, monomer.

It carries out the reaction 1D-myo-inositol 2-(L-cysteinylamino)-2-deoxy-alpha-D-glucopyranoside + acetyl-CoA = mycothiol + CoA + H(+). Its function is as follows. Catalyzes the transfer of acetyl from acetyl-CoA to desacetylmycothiol (Cys-GlcN-Ins) to form mycothiol. This is Mycothiol acetyltransferase from Sanguibacter keddieii (strain ATCC 51767 / DSM 10542 / NCFB 3025 / ST-74).